A 131-amino-acid polypeptide reads, in one-letter code: Small ribosomal subunit protein uS9c (131 aa).

This sequence belongs to the universal ribosomal protein uS9 family.

The protein localises to the plastid. It localises to the chloroplast. The protein is Small ribosomal subunit protein uS9c (rps9) of Emiliania huxleyi (Coccolithophore).